Consider the following 1190-residue polypeptide: Ras-specific guanine nucleotide-releasing factor 2 (1190 aa).

The region spanning 22 to 133 (EGTKRGFLSK…WMEAIHQASY (112 aa)) is the PH 1 domain. Residues 155–193 (ETEKIAANQLRHQLEDQDTEIERLKSEIVALNKTKERMR) are a coiled coil. Positions 205–234 (DIKKIKKVQSFMRGWLCRRKWKTIVQDYIC) constitute an IQ domain. The DH domain occupies 243–429 (KRNQIVFTMV…EELSRVMHDE (187 aa)). In terms of domain architecture, PH 2 spans 470-588 (PSVERGKLSK…WMSDISQCVD (119 aa)). Positions 635-755 (KVPQIRYASV…LTSSLNSRIG (121 aa)) constitute an N-terminal Ras-GEF domain. The segment at 713–744 (VDGKSPRLCRKFSSPPPLAVSRTSSPVRARKL) is disordered. 2 positions are modified to phosphoserine: S725 and S726. Phosphoserine; by CDK5 is present on S736. The segment at 743-751 (KLSLTSSLN) is regulates proteasomal degradation. Residues S745 and S749 each carry the phosphoserine modification. Residues 757–826 (LDLTTSSSSS…QPGGQVADST (70 aa)) are disordered. Over residues 760–776 (TTSSSSSSPTTTVHSPA) the composition is skewed to low complexity. Residues 798 to 810 (TDMSPCRSPSTTP) are compositionally biased toward polar residues. 3 positions are modified to phosphoserine: S801, S805, and S925. The Ras-GEF domain occupies 955-1187 (SAMELAEQIT…YELSLKIEPR (233 aa)). The interval 1052 to 1081 (ALNRSAIYRLKKTWTKVSKQTKALMDKLQK) is responsible of the affinity for farnesylated versus geranylgeranylated Ras.

Homooligomer and heterooligomer with RASGRF1. Interacts with Ras and RAC1. Interacts in a calcium-dependent manner with calmodulin. Interacts with CDK5R1 and probably EPB49. Interacts with the AMPA receptor through GRIA1. Interacts with microtubules. Phosphorylated by CDK5; down-regulates RASGRF2-mediated RAC1 activation. In terms of processing, ubiquitinated upon interaction with Ras. Ubiquitination leads to degradation through the 26S proteasome. Widely expressed. Detected in brain, lung, spleen, pancreas, kidney, liver, heart, mammary gland and skeletal muscle.

The protein localises to the cytoplasm. The protein resides in the cell membrane. It localises to the endoplasmic reticulum membrane. In terms of biological role, functions as a calcium-regulated nucleotide exchange factor activating both Ras and RAC1 through the exchange of bound GDP for GTP. Preferentially activates HRAS in vivo compared to RRAS based on their different types of prenylation. Functions in synaptic plasticity by contributing to the induction of long term potentiation. The chain is Ras-specific guanine nucleotide-releasing factor 2 (Rasgrf2) from Rattus norvegicus (Rat).